We begin with the raw amino-acid sequence, 202 residues long: Histone H1 (202 aa).

2 disordered regions span residues 1 to 50 and 114 to 202; these read MTAI…VTHP and YKLS…KIAV. The segment covering 18–38 has biased composition (basic and acidic residues); the sequence is EASKVKEQAPATDKKPRAPKE. One can recognise an H15 domain in the interval 48-118; that stretch reads THPPYFQMIK…KIKASYKLSE (71 aa). Residues 160-202 show a composition bias toward basic residues; that stretch reads KAKATPKPKKVGAKRTRKSTPAKAKQPKSIKSPAAKRAKKIAV.

This sequence belongs to the histone H1/H5 family.

Its subcellular location is the nucleus. The protein resides in the chromosome. Functionally, histones H1 are necessary for the condensation of nucleosome chains into higher-order structures. The sequence is that of Histone H1 from Solanum pennellii (Tomato).